The sequence spans 349 residues: Anthranilate phosphoribosyltransferase (349 aa).

Residues glycine 94, 97–98 (GD), threonine 102, 104–107 (NIST), 122–130 (KHGNRSVSS), and serine 134 contribute to the 5-phospho-alpha-D-ribose 1-diphosphate site. Glycine 94 serves as a coordination point for anthranilate. Residue serine 106 participates in Mg(2+) binding. Position 125 (asparagine 125) interacts with anthranilate. Residue arginine 180 participates in anthranilate binding. Residues aspartate 239 and glutamate 240 each contribute to the Mg(2+) site.

This sequence belongs to the anthranilate phosphoribosyltransferase family. As to quaternary structure, homodimer. It depends on Mg(2+) as a cofactor.

It carries out the reaction N-(5-phospho-beta-D-ribosyl)anthranilate + diphosphate = 5-phospho-alpha-D-ribose 1-diphosphate + anthranilate. The protein operates within amino-acid biosynthesis; L-tryptophan biosynthesis; L-tryptophan from chorismate: step 2/5. Functionally, catalyzes the transfer of the phosphoribosyl group of 5-phosphorylribose-1-pyrophosphate (PRPP) to anthranilate to yield N-(5'-phosphoribosyl)-anthranilate (PRA). The protein is Anthranilate phosphoribosyltransferase of Trichlorobacter lovleyi (strain ATCC BAA-1151 / DSM 17278 / SZ) (Geobacter lovleyi).